The chain runs to 277 residues: 3-methyl-2-oxobutanoate hydroxymethyltransferase (277 aa).

Mg(2+) is bound by residues Asp53 and Asp96. Residues 53 to 54 (DS), Asp96, and Lys126 each bind 3-methyl-2-oxobutanoate. Glu128 contributes to the Mg(2+) binding site. Glu195 functions as the Proton acceptor in the catalytic mechanism.

It belongs to the PanB family. Homodecamer; pentamer of dimers. Mg(2+) is required as a cofactor.

It localises to the cytoplasm. The enzyme catalyses 3-methyl-2-oxobutanoate + (6R)-5,10-methylene-5,6,7,8-tetrahydrofolate + H2O = 2-dehydropantoate + (6S)-5,6,7,8-tetrahydrofolate. It functions in the pathway cofactor biosynthesis; (R)-pantothenate biosynthesis; (R)-pantoate from 3-methyl-2-oxobutanoate: step 1/2. In terms of biological role, catalyzes the reversible reaction in which hydroxymethyl group from 5,10-methylenetetrahydrofolate is transferred onto alpha-ketoisovalerate to form ketopantoate. This chain is 3-methyl-2-oxobutanoate hydroxymethyltransferase, found in Chlorobaculum tepidum (strain ATCC 49652 / DSM 12025 / NBRC 103806 / TLS) (Chlorobium tepidum).